A 210-amino-acid polypeptide reads, in one-letter code: MALELLTPFTKVELEEEKKESNRKQIGILGGNFNPIHNAHLVVADQVRQQLGLDQVLLMPECKPPHVDAKETIDEKHRLRMLELAIEDVEGLAIETCELERQGISYTYDTMLYLTEQHPDVDFYFIIGADMVDYLPKWHRIDELVKLVQFVGVQRPKYKAGTSYPVIWVDLPLMDISSSMIRDFIKKGRQPNYLLPKRVLDYITQEGLYQ.

Belongs to the NadD family.

The catalysed reaction is nicotinate beta-D-ribonucleotide + ATP + H(+) = deamido-NAD(+) + diphosphate. It participates in cofactor biosynthesis; NAD(+) biosynthesis; deamido-NAD(+) from nicotinate D-ribonucleotide: step 1/1. Its function is as follows. Catalyzes the reversible adenylation of nicotinate mononucleotide (NaMN) to nicotinic acid adenine dinucleotide (NaAD). The sequence is that of Probable nicotinate-nucleotide adenylyltransferase from Streptococcus pyogenes serotype M3 (strain ATCC BAA-595 / MGAS315).